A 3590-amino-acid polypeptide reads, in one-letter code: Filamentous hemagglutinin (3590 aa).

Disordered stretches follow at residues 3256–3309 and 3417–3498; these read GGGS…VEVS and APPP…GRHV. Pro residues predominate over residues 3289-3299; it reads PSRPTTPPASP. The segment covering 3300–3309 has biased composition (low complexity); the sequence is QPIRATVEVS. The segment covering 3417-3432 has biased composition (pro residues); that stretch reads APPPVVETAQPLPPVK.

It localises to the cell surface. Its function is as follows. Evidence for a role in host-cell binding and infection. This is Filamentous hemagglutinin (fhaB) from Bordetella pertussis (strain Tohama I / ATCC BAA-589 / NCTC 13251).